The sequence spans 221 residues: Alpha-ketoglutarate-dependent dioxygenase alkB homolog 7, mitochondrial (221 aa).

The N-terminal 23 residues, 1–23, are a transit peptide targeting the mitochondrion; the sequence is MAGGGQVVLRTLSQQGWVRGSGA. Positions 121 and 123 each coordinate Fe cation. Tyr-165 serves as a coordination point for 2-oxoglutarate. His-177 serves as a coordination point for Fe cation. Residues 197-199 and Arg-203 contribute to the 2-oxoglutarate site; that span reads RIS.

Belongs to the alkB family. It depends on Fe(2+) as a cofactor.

The protein resides in the mitochondrion matrix. Functionally, may function as protein hydroxylase; can catalyze auto-hydroxylation at Leu-110 (in vitro), but this activity may be due to the absence of the true substrate. Required to induce programmed necrosis in response to DNA damage caused by cytotoxic alkylating agents. Acts by triggering the collapse of mitochondrial membrane potential and loss of mitochondrial function that leads to energy depletion and cell death. ALKBH7-mediated necrosis is probably required to prevent the accumulation of cells with DNA damage. Does not display DNA demethylase activity. Involved in fatty acid metabolism. In Bos taurus (Bovine), this protein is Alpha-ketoglutarate-dependent dioxygenase alkB homolog 7, mitochondrial (ALKBH7).